The following is a 447-amino-acid chain: Probable ribonuclease FAU-1 (447 aa).

The tract at residues 424 to 447 is disordered; that stretch reads PEAPGGKICTPEGLTSAPPRSSSA.

Belongs to the FAU-1 family.

Probable RNase involved in rRNA stability through maturation and/or degradation of precursor rRNAs. Binds to RNA in loop regions with AU-rich sequences. In Pyrobaculum neutrophilum (strain DSM 2338 / JCM 9278 / NBRC 100436 / V24Sta) (Thermoproteus neutrophilus), this protein is Probable ribonuclease FAU-1.